The sequence spans 275 residues: Esterase AAEL000016 (275 aa).

Residues 1 to 21 (MMANETAAKSTKSSPTPAVEP) are disordered. Polar residues predominate over residues 7–16 (AAKSTKSSPT). Catalysis depends on charge relay system residues Ser-129, Asp-187, and His-214. A disordered region spans residues 253-275 (LVDDSGPAGNGVHDDDDDDDDSD). Acidic residues predominate over residues 266–275 (DDDDDDDDSD).

It belongs to the LovG family.

The chain is Esterase AAEL000016 from Aedes aegypti (Yellowfever mosquito).